A 242-amino-acid polypeptide reads, in one-letter code: Uridylate kinase (242 aa).

Residue 11 to 14 (KLSG) coordinates ATP. Residues 19–24 (GNMGYG) form an involved in allosteric activation by GTP region. Gly-53 serves as a coordination point for UMP. Residues Gly-54 and Arg-58 each contribute to the ATP site. UMP contacts are provided by residues Asp-73 and 134–141 (SGNPFFTT). ATP contacts are provided by Thr-161, Tyr-167, and Asp-170.

It belongs to the UMP kinase family. In terms of assembly, homohexamer.

It localises to the cytoplasm. It carries out the reaction UMP + ATP = UDP + ADP. It functions in the pathway pyrimidine metabolism; CTP biosynthesis via de novo pathway; UDP from UMP (UMPK route): step 1/1. With respect to regulation, allosterically activated by GTP. Inhibited by UTP. In terms of biological role, catalyzes the reversible phosphorylation of UMP to UDP. This chain is Uridylate kinase, found in Nostoc sp. (strain PCC 7120 / SAG 25.82 / UTEX 2576).